We begin with the raw amino-acid sequence, 193 residues long: Large ribosomal subunit protein uL18 (193 aa).

This sequence belongs to the universal ribosomal protein uL18 family. Part of the 50S ribosomal subunit. Contacts the 5S and 23S rRNAs.

This is one of the proteins that bind and probably mediate the attachment of the 5S RNA into the large ribosomal subunit, where it forms part of the central protuberance. This Methanococcus maripaludis (strain C5 / ATCC BAA-1333) protein is Large ribosomal subunit protein uL18.